The following is a 356-amino-acid chain: GDP-mannose 4,6 dehydratase (356 aa).

NADP(+)-binding positions include 12-17 (GITGQD), 69-70 (DL), 91-95 (LGAQS), and Tyr106. Thr138 is a catalytic residue. Active-site nucleophile residues include Glu140 and Tyr162. NADP(+) contacts are provided by Lys166, His192, and Arg197.

Belongs to the NAD(P)-dependent epimerase/dehydratase family. GDP-mannose 4,6-dehydratase subfamily. It depends on NADP(+) as a cofactor.

It catalyses the reaction GDP-alpha-D-mannose = GDP-4-dehydro-alpha-D-rhamnose + H2O. Its pathway is nucleotide-sugar biosynthesis; GDP-L-fucose biosynthesis via de novo pathway; GDP-L-fucose from GDP-alpha-D-mannose: step 1/2. Participates in the synthesis of GDP-L-fucose, catalyzing the conversion of GDP-D-mannose to GDP-4-dehydro-6-deoxy-D-mannose (GDP-4-dehydro-alpha-D-rhamnose) which is further catalyzed by GDP-L-fucose synthase (ger). GDP-L-fucose is important for the synthesis of fucosylated N-glycans which are expressed on the cell surface. The sequence is that of GDP-mannose 4,6 dehydratase (gmd) from Dictyostelium discoideum (Social amoeba).